The following is a 256-amino-acid chain: Protein LIKE COV 1 (256 aa).

Residues 1-10 (MANRERDREL) show a composition bias toward basic and acidic residues. Residues 1-39 (MANRERDRELLIPVADFGDKDDGSSSKPSSSSSASSSHQ) form a disordered region. The Cytoplasmic portion of the chain corresponds to 1-60 (MANRERDRELLIPVADFGDKDDGSSSKPSSSSSASSSHQSGHETLSLFIRGWASKKFMTG). The span at 25–39 (SSKPSSSSSASSSHQ) shows a compositional bias: low complexity. The chain crosses the membrane as a helical span at residues 61-81 (CVILLPIAVTFYTTWWFIHFV). Residues 82–93 (DGFFSPIYALLG) are Extracellular-facing. A helical transmembrane segment spans residues 94 to 114 (INIFGFGFLTSIAFIFLVGVF). Residues 115–256 (MSSWLGASVL…KPLASIGNES (142 aa)) lie on the Cytoplasmic side of the membrane.

It belongs to the plant COV1 protein family. In terms of tissue distribution, expressed at low levels in flowers, stems, roots and leaves.

It localises to the membrane. The polypeptide is Protein LIKE COV 1 (Arabidopsis thaliana (Mouse-ear cress)).